The primary structure comprises 563 residues: NAD-dependent malic enzyme (563 aa).

Catalysis depends on Tyr101, which acts as the Proton donor. Arg154 is an NAD(+) binding site. The Proton acceptor role is filled by Lys172. A divalent metal cation-binding residues include Glu243, Asp244, and Asp267. 2 residues coordinate NAD(+): Asp267 and Asn416.

Belongs to the malic enzymes family. As to quaternary structure, homotetramer. Mg(2+) serves as cofactor. Requires Mn(2+) as cofactor.

It carries out the reaction (S)-malate + NAD(+) = pyruvate + CO2 + NADH. The catalysed reaction is oxaloacetate + H(+) = pyruvate + CO2. The protein is NAD-dependent malic enzyme of Pseudomonas syringae pv. syringae (strain B728a).